A 477-amino-acid chain; its full sequence is MEKAEFQVIIVGGSIGGLTLAHCLHRAGIKHVVLEKASDPAPQIGASIGILPNGARVLDQLQLYDQVEEHIEPLSKATIGLPDGFNFSSSYPKIIDQRFGFPIAFLDRQKMLEILYKGYPDPSKIRLGQRVTSIESLDDGVLITTTTGHVYRGDLLVGADGVHSIVRREIWKARGIARRVSKIKQDSSKLTVEFRCIFGISSAMPGLKLGEQVNALFDGLTIVTIHGKDGRIYWFVIQKLGKKYVYPDSPRYTSHETSIAAEEIRDVKFYENITFGELWDKRETSSMTALEENTFKVWHHGRCVLLGDSVHKMTPNVGQGANMAIEDAAALANLLRKMRISSGPYFPTSSQMEFLLQKYRDLRYERVNTIYQSSRFLVRFQVRDGIIYSLLSRYWAPYAGDLPADMASKTIADGTMCDFLPTPKRSGGGWEKYSKQGRSWSYLTQLMIYLFGLTIVYTSLTMMFDLEGALKFYFLQV.

A helical transmembrane segment spans residues 4-24; that stretch reads AEFQVIIVGGSIGGLTLAHCL. FAD is bound by residues Glu35, Gly49, and Arg108. Arg195 is an active-site residue. Positions 308 and 321 each coordinate FAD. A helical transmembrane segment spans residues 446 to 466; the sequence is LMIYLFGLTIVYTSLTMMFDL.

Belongs to the paxM FAD-dependent monooxygenase family. Requires FAD as cofactor.

It is found in the membrane. The protein operates within secondary metabolite biosynthesis. In terms of biological role, FAD-dependent monooxygenase; part of the gene cluster that mediates the biosynthesis of paxilline, a mycotoxin that acts as an inhibitor of mammalian maxi-K channels. PaxG, the geranylgeranyl diphosphate (GGPP) synthase is proposed to catalyze the first step in paxilline biosynthesis. Condensation of indole-3-glycerol phosphate with GGPP by paxC then forms 3-geranylgeranylindole (3-GGI), followed by epoxidation and cyclization of this intermediate (by paxM and paxB) to form paspaline. Paspaline is subsequently converted to 13-desoxypaxilline by paxP, the latter being then converted to paxilline by paxQ. Finally paxilline can be mono- and di-prenylated by paxD. The chain is FAD-dependent monooxygenase paxM from Penicillium paxilli.